A 566-amino-acid chain; its full sequence is Membrane protein insertase YidC (566 aa).

Helical transmembrane passes span I3–W23, G346–V366, W369–A389, G436–I456, and M509–L529.

It belongs to the OXA1/ALB3/YidC family. Type 1 subfamily. In terms of assembly, interacts with the Sec translocase complex via SecD. Specifically interacts with transmembrane segments of nascent integral membrane proteins during membrane integration.

It localises to the cell inner membrane. Required for the insertion and/or proper folding and/or complex formation of integral membrane proteins into the membrane. Involved in integration of membrane proteins that insert both dependently and independently of the Sec translocase complex, as well as at least some lipoproteins. Aids folding of multispanning membrane proteins. This chain is Membrane protein insertase YidC, found in Coxiella burnetii (strain Dugway 5J108-111).